A 792-amino-acid chain; its full sequence is RNA-binding protein RRM4 (792 aa).

Residues 37 to 60 are disordered; it reads TDSTAQASHAAEQTIDAHQQAGDV. RRM domains lie at 72-145, 154-235, and 321-398; these read PLLY…QDAS, KPRL…IDTA, and CNLF…LHEP. Residues 412–424 show a composition bias toward low complexity; the sequence is AANADNSDMSSNS. 2 disordered regions span residues 412–438 and 630–649; these read AANADNSDMSSNSPPTEARKADKRQSR and DESGEDLSPPRASSGSAPVP. The segment covering 640-649 has biased composition (polar residues); it reads RASSGSAPVP. The PABC domain maps to 715–792; that stretch reads ATDDFIDSLQ…QHKVAAGLNK (78 aa).

It belongs to the polyadenylate-binding protein type-1 family. As to quaternary structure, part of large ribonucleoprotein complexes (mRNPs) containing RNA-binding proteins RRM4 and PAB1, endosome-binding protein UPA1, core scaffold protein UPA2 and associated factor GRP1. Interacts (via PABC domain) with UPA1 (via PAM2 domain).

It localises to the cytoplasm. It is found in the cytoskeleton. Its subcellular location is the endosome. In terms of biological role, key RNA-binding protein involved in the formation of polar-growing hyphae which is essential for infection by the plant pathogen. During filamentation, assembles into particles that shuttle bidirectionally along microtubules to both poles. The RRM4 transport particles are part of the endosomal mRNP transport that regulates polarity of the infectious hyphae by transporting distinct mRNAs encoding, for example, the ubiquitin fusion protein UBI1, the small G protein RHO3, or the septin CDC3, from the nucleus to cell poles. Recognizes a broad spectrum of cargo mRNAs and precisely binds at stop codons, which constitute landmark sites of translation, suggesting an intimate connection of mRNA transport and translation. Also binds to the specific binding motif UAUG of cargo mRNAs via its third RRM. Plus-end-directed KIN3, a kinesin-3 type motor, mediates anterograde transport of RRM4-containing mRNPs whereas split dynein DYM1-DYN2 functions in retrograde movement of mRNPs. This chain is RNA-binding protein RRM4, found in Mycosarcoma maydis (Corn smut fungus).